The chain runs to 327 residues: Tetraacyldisaccharide 4'-kinase (327 aa).

52–59 (TLGGAGKT) is a binding site for ATP.

This sequence belongs to the LpxK family.

The catalysed reaction is a lipid A disaccharide + ATP = a lipid IVA + ADP + H(+). The protein operates within glycolipid biosynthesis; lipid IV(A) biosynthesis; lipid IV(A) from (3R)-3-hydroxytetradecanoyl-[acyl-carrier-protein] and UDP-N-acetyl-alpha-D-glucosamine: step 6/6. Its function is as follows. Transfers the gamma-phosphate of ATP to the 4'-position of a tetraacyldisaccharide 1-phosphate intermediate (termed DS-1-P) to form tetraacyldisaccharide 1,4'-bis-phosphate (lipid IVA). This chain is Tetraacyldisaccharide 4'-kinase, found in Methylorubrum extorquens (strain CM4 / NCIMB 13688) (Methylobacterium extorquens).